A 640-amino-acid polypeptide reads, in one-letter code: WW domain-binding protein 11 (640 aa).

The span at 1 to 11 (MGRRSTSSTKS) shows a compositional bias: polar residues. A disordered region spans residues 1–37 (MGRRSTSSTKSGKFMNPTDQARKEARKRELKKNKKQR). Residues 28–37 (RELKKNKKQR) are compositionally biased toward basic residues. The stretch at 75–122 (EKVLRDKRKKLRETFERIVRLYERENPETYKELRKLELEYETKRGQLS) forms a coiled coil. Disordered regions lie at residues 155–174 (DIPL…SALG), 187–563 (VPRL…ISAK), and 582–625 (RVRR…LKTK). Over residues 194-207 (RKPPGPPPGPPPPQ) the composition is skewed to pro residues. Basic and acidic residues predominate over residues 230–240 (DGGRDSDSKSE). Residues 241 to 251 (ADEESDSQEDS) are compositionally biased toward acidic residues. Residues 252–274 (SAEREDSDRGERDEERERADKHT) show a composition bias toward basic and acidic residues. Residue S285 is modified to Phosphoserine. The segment covering 315–338 (PEEEEEDEEEEYSESEDSEAEDQA) has biased composition (acidic residues). Positions 356–371 (APMAAQQPPSLMQAPP) are enriched in low complexity. Composition is skewed to pro residues over residues 372–412 (ITGP…PPGL) and 422–491 (RLLP…PPLN). The short motif at 421–432 (PRLLPPGPPPGR) is the PGR element. A compositionally biased stretch (gly residues) spans 547–558 (GSGGASAQGGGA). Residues 586 to 599 (DRAGGTGRREEERP) are compositionally biased toward basic and acidic residues. The span at 603 to 616 (QQTPAHQAPPIAHA) shows a compositional bias: low complexity.

Its subcellular location is the cytoplasm. The protein localises to the nucleus. Activates pre-mRNA splicing. The polypeptide is WW domain-binding protein 11 (wbp11) (Danio rerio (Zebrafish)).